The chain runs to 851 residues: mRNA-capping enzyme catalytic subunit (851 aa).

Residues 1–544 form a triphosphatase-guanylyltransferase region; the sequence is MDKYISKTPL…EEEKLADIAA (544 aa). Mg(2+) contacts are provided by Glu38, Glu40, Glu199, and Glu201. The active-site N6-GMP-lysine intermediate is Lys266. Position 554 to 555 (554 to 555) interacts with S-adenosyl-L-methionine; it reads LN. In terms of domain architecture, mRNA cap 0 methyltransferase spans 565 to 850; the sequence is RVRGALGILS…HYMVYVFSKE (286 aa). MRNA is bound at residue 574 to 575; it reads SN. Residues Lys578, Asp603, Asp625, and 683-685 contribute to the S-adenosyl-L-methionine site; that span reads QFA.

The protein in the N-terminal section; belongs to the dsDNA virus mRNA guanylyltransferase family. In the C-terminal section; belongs to the class I-like SAM-binding methyltransferase superfamily. mRNA cap 0 methyltransferase family. As to quaternary structure, heterodimer of a catalytic and a regulatory subunit. Intrinsic methyltransferase activity of the catalytic subunit is weak and needs to be stimulated 30- to 50-fold by the regulatory subunit, which is itself catalytically inert. Mg(2+) is required as a cofactor.

The protein resides in the virion. It catalyses the reaction a 5'-end triphospho-ribonucleoside in mRNA + H2O = a 5'-end diphospho-ribonucleoside in mRNA + phosphate + H(+). The catalysed reaction is a 5'-end diphospho-ribonucleoside in mRNA + GTP + H(+) = a 5'-end (5'-triphosphoguanosine)-ribonucleoside in mRNA + diphosphate. It carries out the reaction a 5'-end (5'-triphosphoguanosine)-ribonucleoside in mRNA + S-adenosyl-L-methionine = a 5'-end (N(7)-methyl 5'-triphosphoguanosine)-ribonucleoside in mRNA + S-adenosyl-L-homocysteine. Catalytic subunit of the mRNA capping enzyme which catalyzes three enzymatic reactions: the 5' triphosphate end of the pre-mRNA is hydrolyzed to a diphosphate by RNA 5' triphosphatase; the diphosphate RNA end is capped with GMP by RNA guanylyltransferase and the GpppN cap is methylated by RNA (guanine-N7) methyltransferase. Heterodimeric mRNA capping enzyme catalyzes the linkage of a N7-methyl-guanosine moiety to the first transcribed nucleotide (cap 0 structure), whereas the polymerase associated VP39 is responsible for a second methylation at the 2'-O position of the ribose (cap 1 structure). Its function is as follows. The heterodimeric enzyme is also involved in early viral gene transcription termination and intermediate viral gene transcription initiation. Early gene transcription termination requires the termination factor VTF, the DNA-dependent ATPase NPH-I and the Rap94 subunit of the viral RNA polymerase, as well as the presence of a specific termination motif. Binds, together with RAP94, to the termination motif 5'-UUUUUNU-3' in the nascent early mRNA. This chain is mRNA-capping enzyme catalytic subunit, found in Fowlpox virus (strain NVSL) (FPV).